The following is a 616-amino-acid chain: UvrABC system protein C (616 aa).

The region spanning 12–97 (NDAGVYQYFD…IKQLKPKYNI (86 aa)) is the GIY-YIG domain. In terms of domain architecture, UVR spans 203–238 (TKLISKLNEKMLQYSNDFRFEEAMTLRDRIKTIEKS).

The protein belongs to the UvrC family. In terms of assembly, interacts with UvrB in an incision complex.

The protein resides in the cytoplasm. The UvrABC repair system catalyzes the recognition and processing of DNA lesions. UvrC both incises the 5' and 3' sides of the lesion. The N-terminal half is responsible for the 3' incision and the C-terminal half is responsible for the 5' incision. This is UvrABC system protein C from Aliarcobacter butzleri (strain RM4018) (Arcobacter butzleri).